The primary structure comprises 344 residues: L-rhamnose-proton symporter (344 aa).

Helical transmembrane passes span 4-24, 38-58, 68-88, 101-121, 137-157, 175-195, 214-234, 259-279, 290-310, and 321-341; these read AITM…CFYA, WSVG…ALLL, FNLS…IGNI, MGIG…TPII, TLLG…AGQL, LLLA…MNAA, LPSY…FCFI, ILLS…YAWG, MSWM…GLVL, and VAVL…VGLG.

Belongs to the L-rhamnose transporter (TC 2.A.7.6) family.

The protein resides in the cell inner membrane. The catalysed reaction is L-rhamnopyranose(in) + H(+)(in) = L-rhamnopyranose(out) + H(+)(out). Uptake of L-rhamnose across the cytoplasmic membrane with the concomitant transport of protons into the cell (symport system). This chain is L-rhamnose-proton symporter, found in Salmonella gallinarum (strain 287/91 / NCTC 13346).